The following is a 761-amino-acid chain: Polyribonucleotide nucleotidyltransferase (761 aa).

Mg(2+)-binding residues include Asp-532 and Asp-538. The region spanning 598 to 657 (PRVISVQIPVDKIGELIGPKGKTINAIQDETGADISIDEDGTVYIGAVDGPSAEAARAQV) is the KH domain. Positions 669–741 (GEQFLGTVVK…DRGKLSLAPV (73 aa)) constitute an S1 motif domain.

The protein belongs to the polyribonucleotide nucleotidyltransferase family. The cofactor is Mg(2+).

The protein localises to the cytoplasm. The catalysed reaction is RNA(n+1) + phosphate = RNA(n) + a ribonucleoside 5'-diphosphate. Involved in mRNA degradation. Catalyzes the phosphorolysis of single-stranded polyribonucleotides processively in the 3'- to 5'-direction. The chain is Polyribonucleotide nucleotidyltransferase from Leifsonia xyli subsp. xyli (strain CTCB07).